Here is a 97-residue protein sequence, read N- to C-terminus: Large ribosomal subunit protein bL28 (97 aa).

The protein belongs to the bacterial ribosomal protein bL28 family.

The chain is Large ribosomal subunit protein bL28 from Brucella abortus (strain S19).